The following is a 506-amino-acid chain: RNA-splicing ligase RtcB homolog 1 (506 aa).

D120, C123, H228, H260, and H354 together coordinate Mn(2+). A GMP-binding site is contributed by 227–231 (NHYAE). GMP-binding positions include 354–355 (HN), 403–406 (GGSM), S410, 429–432 (HGAG), and K505. The GMP-histidine intermediate role is filled by H429.

This sequence belongs to the RtcB family. In terms of assembly, catalytic component of the tRNA-splicing ligase complex. Mn(2+) serves as cofactor.

It carries out the reaction a 3'-end 3'-phospho-ribonucleotide-RNA + a 5'-end dephospho-ribonucleoside-RNA + GTP = a ribonucleotidyl-ribonucleotide-RNA + GMP + diphosphate. The enzyme catalyses a 3'-end 2',3'-cyclophospho-ribonucleotide-RNA + a 5'-end dephospho-ribonucleoside-RNA + GTP + H2O = a ribonucleotidyl-ribonucleotide-RNA + GMP + diphosphate + H(+). Functionally, catalytic subunit of the tRNA-splicing ligase complex that acts by directly joining spliced tRNA halves to mature-sized tRNAs by incorporating the precursor-derived splice junction phosphate into the mature tRNA as a canonical 3',5'-phosphodiester. May act as an RNA ligase with broad substrate specificity, and may function toward other RNAs. The polypeptide is RNA-splicing ligase RtcB homolog 1 (Culex quinquefasciatus (Southern house mosquito)).